The primary structure comprises 428 residues: Palmitoyltransferase pfa4 (428 aa).

Residues 1 to 10 (MLCRSFNISQ) lie on the Cytoplasmic side of the membrane. The helical transmembrane segment at 11–31 (LAIPFVSVLISFLAYTSQLFF) threads the bilayer. The Lumenal segment spans residues 32 to 43 (YYFEEAPLRSEE). The chain crosses the membrane as a helical span at residues 44 to 61 (FWRLNIFAVCIWVCYYRA). Over 62–134 (CTVDPGRIPK…SNCVSHFTYP (73 aa)) the chain is Cytoplasmic. A DHHC domain is found at 91 to 141 (RWCRRCEAFKPPRAHHCKTCQRCIPKMDHHCPWTSNCVSHFTYPHFMRFLF). Cys-121 acts as the S-palmitoyl cysteine intermediate in catalysis. A helical membrane pass occupies residues 135 to 155 (HFMRFLFYAVVGMGYLETLLF). The Lumenal portion of the chain corresponds to 156–177 (ERASIVWASRHLPSYLGPGLGQ). The chain crosses the membrane as a helical span at residues 178 to 198 (LVHLFILLVVNSLTWLALFIL). Topologically, residues 199-428 (LLRSIWSLAL…GILMQRRRQQ (230 aa)) are cytoplasmic. A disordered region spans residues 339–400 (QRSNDASHSG…WKNSEGDRLR (62 aa)). Residues 360-373 (DRFNENKAKERLSE) are compositionally biased toward basic and acidic residues. Positions 374 to 388 (SESDFSDDEEVQDGE) are enriched in acidic residues. Positions 389–400 (EGWKNSEGDRLR) are enriched in basic and acidic residues.

This sequence belongs to the DHHC palmitoyltransferase family. PFA4 subfamily.

The protein resides in the endoplasmic reticulum membrane. The catalysed reaction is L-cysteinyl-[protein] + hexadecanoyl-CoA = S-hexadecanoyl-L-cysteinyl-[protein] + CoA. Functionally, mediates the reversible addition of palmitate to target proteins, thereby regulating their membrane association and biological function. This chain is Palmitoyltransferase pfa4, found in Aspergillus fumigatus (strain ATCC MYA-4609 / CBS 101355 / FGSC A1100 / Af293) (Neosartorya fumigata).